Here is a 332-residue protein sequence, read N- to C-terminus: Phosphatidylglycerol--prolipoprotein diacylglyceryl transferase (332 aa).

The next 3 membrane-spanning stretches (helical) occupy residues 18-38 (FPYF…AYIL), 66-86 (FFTW…TMVY), and 111-131 (VGLR…GGGL). Residue Arg159 participates in a 1,2-diacyl-sn-glycero-3-phospho-(1'-sn-glycerol) binding. The next 2 membrane-spanning stretches (helical) occupy residues 249–269 (GFLV…IEYF) and 302–322 (ILCV…SAYH).

It belongs to the Lgt family.

The protein resides in the cell inner membrane. The enzyme catalyses L-cysteinyl-[prolipoprotein] + a 1,2-diacyl-sn-glycero-3-phospho-(1'-sn-glycerol) = an S-1,2-diacyl-sn-glyceryl-L-cysteinyl-[prolipoprotein] + sn-glycerol 1-phosphate + H(+). It participates in protein modification; lipoprotein biosynthesis (diacylglyceryl transfer). Functionally, catalyzes the transfer of the diacylglyceryl group from phosphatidylglycerol to the sulfhydryl group of the N-terminal cysteine of a prolipoprotein, the first step in the formation of mature lipoproteins. In Treponema pallidum (strain Nichols), this protein is Phosphatidylglycerol--prolipoprotein diacylglyceryl transferase.